Reading from the N-terminus, the 267-residue chain is L-aspartate dehydrogenase (267 aa).

Positions 124 and 190 each coordinate NAD(+). Histidine 220 is a catalytic residue.

It belongs to the L-aspartate dehydrogenase family.

It catalyses the reaction L-aspartate + NADP(+) + H2O = oxaloacetate + NH4(+) + NADPH + H(+). The catalysed reaction is L-aspartate + NAD(+) + H2O = oxaloacetate + NH4(+) + NADH + H(+). The protein operates within cofactor biosynthesis; NAD(+) biosynthesis; iminoaspartate from L-aspartate (dehydrogenase route): step 1/1. Its function is as follows. Specifically catalyzes the NAD or NADP-dependent dehydrogenation of L-aspartate to iminoaspartate. The protein is L-aspartate dehydrogenase of Ralstonia pickettii (strain 12J).